We begin with the raw amino-acid sequence, 20 residues long: T cell receptor alpha joining 42 (20 aa).

The segment at 1-20 (YGGSQGNLIFGKGTKLSVKP) is disordered.

As to quaternary structure, alpha-beta TR is a heterodimer composed of an alpha and beta chain; disulfide-linked. The alpha-beta TR is associated with the transmembrane signaling CD3 coreceptor proteins to form the TR-CD3 (TcR or TCR). The assembly of alpha-beta TR heterodimers with CD3 occurs in the endoplasmic reticulum where a single alpha-beta TR heterodimer associates with one CD3D-CD3E heterodimer, one CD3G-CD3E heterodimer and one CD247 homodimer forming a stable octameric structure. CD3D-CD3E and CD3G-CD3E heterodimers preferentially associate with TR alpha and TR beta chains, respectively. The association of the CD247 homodimer is the last step of TcR assembly in the endoplasmic reticulum and is required for transport to the cell surface.

It is found in the cell membrane. Functionally, j region of the variable domain of T cell receptor (TR) alpha chain that participates in the antigen recognition. Alpha-beta T cell receptors are antigen specific receptors which are essential to the immune response and are present on the cell surface of T lymphocytes. Recognize peptide-major histocompatibility (MH) (pMH) complexes that are displayed by antigen presenting cells (APC), a prerequisite for efficient T cell adaptive immunity against pathogens. Binding of alpha-beta TR to pMH complex initiates TR-CD3 clustering on the cell surface and intracellular activation of LCK that phosphorylates the ITAM motifs of CD3G, CD3D, CD3E and CD247 enabling the recruitment of ZAP70. In turn, ZAP70 phosphorylates LAT, which recruits numerous signaling molecules to form the LAT signalosome. The LAT signalosome propagates signal branching to three major signaling pathways, the calcium, the mitogen-activated protein kinase (MAPK) kinase and the nuclear factor NF-kappa-B (NF-kB) pathways, leading to the mobilization of transcription factors that are critical for gene expression and essential for T cell growth and differentiation. The T cell repertoire is generated in the thymus, by V-(D)-J rearrangement. This repertoire is then shaped by intrathymic selection events to generate a peripheral T cell pool of self-MH restricted, non-autoaggressive T cells. Post-thymic interaction of alpha-beta TR with the pMH complexes shapes TR structural and functional avidity. This is T cell receptor alpha joining 42 from Homo sapiens (Human).